We begin with the raw amino-acid sequence, 285 residues long: Putative phosphatase MG125 (285 aa).

Residue aspartate 8 is the Nucleophile of the active site. Aspartate 8 provides a ligand contact to Mg(2+). Leucine 9 lines the phosphate pocket. Aspartate 10 lines the Mg(2+) pocket. Residues 44-45 (TG) and lysine 205 each bind phosphate. Positions 228 and 229 each coordinate Mg(2+). Asparagine 231 is a binding site for phosphate.

The protein belongs to the HAD-like hydrolase superfamily. Cof family. The cofactor is Mg(2+).

The sequence is that of Putative phosphatase MG125 from Mycoplasma genitalium (strain ATCC 33530 / DSM 19775 / NCTC 10195 / G37) (Mycoplasmoides genitalium).